The chain runs to 551 residues: Membrane protein insertase YidC (551 aa).

A helical membrane pass occupies residues 3–23 (ANHIRILLLVTIAIMFISLMG). The segment covering 33–47 (NTKQQTSATQNNSHY) has biased composition (polar residues). The disordered stretch occupies residues 33–59 (NTKQQTSATQNNSHYDNADSSTNTDVT). Low complexity predominate over residues 50–59 (ADSSTNTDVT). 3 consecutive transmembrane segments (helical) span residues 361–381 (LVGN…LIFY), 431–451 (LSGC…YWVL), and 504–524 (VMMF…SGLV).

The protein belongs to the OXA1/ALB3/YidC family. Type 1 subfamily. As to quaternary structure, interacts with the Sec translocase complex via SecD. Specifically interacts with transmembrane segments of nascent integral membrane proteins during membrane integration.

Its subcellular location is the cell inner membrane. Its function is as follows. Required for the insertion and/or proper folding and/or complex formation of integral membrane proteins into the membrane. Involved in integration of membrane proteins that insert both dependently and independently of the Sec translocase complex, as well as at least some lipoproteins. Aids folding of multispanning membrane proteins. This is Membrane protein insertase YidC from Francisella tularensis subsp. mediasiatica (strain FSC147).